A 346-amino-acid polypeptide reads, in one-letter code: Tripartite motif-containing protein 44 (346 aa).

The tract at residues 68 to 167 (TPPASGGDDA…ETEAESEFDP (100 aa)) is disordered. A compositionally biased stretch (acidic residues) spans 89-167 (EGEVESEVGE…ETEAESEFDP (79 aa)). The B box-type zinc-finger motif lies at 176-217 (VAKRKCPDHGLDLSTYCQEDRQLICVLCPVIGAHRGHQLSTL). Residues Cys181, His184, Cys203, and His209 each coordinate Zn(2+). Positions 292-327 (AHVTEILADIQSHMDRLMTQMAQAKEQLDTSNESAE) form a coiled coil. A disordered region spans residues 313 to 346 (AQAKEQLDTSNESAEPKAEGDEEGPSGASEEEDT). Residues 332-346 (GDEEGPSGASEEEDT) are compositionally biased toward acidic residues. A phosphoserine mark is found at Ser338 and Ser341.

In terms of assembly, interacts (via coiled coil) with TRIM17 (via coiled coil). As to expression, expressed mainly in brain with high level in cerebral hemispheres and cerebellum. Lower expression in kidney, lung and spleen. In brain is detected in the hippocampus, thalamic and pretectal nuclei, substantia nigra, the dorsal part of the medulla, the cerebellum, in the olfactory nucleus, other cortical areas apart from hippocampus and the striatum. Indeed expression is confined in neuronal somata namely in the CA3 region and dentate gyrus of the hippocampus, caudate-putamen, parabranchial nucleus, olfactory nucleus, cortex, deep cerebellar nuclei and thalamus. Also highly expressed in the spleen. thymus and testis.

In terms of biological role, may play a role in the process of differentiation and maturation of neuronal cells. May regulate the activity of TRIM17. Is a negative regulator of PAX6 expression. The sequence is that of Tripartite motif-containing protein 44 (Trim44) from Mus musculus (Mouse).